The chain runs to 542 residues: CTP synthase (542 aa).

An amidoligase domain region spans residues 1–265 (MTRYIFVTGG…DDIVVERFGL (265 aa)). Serine 13 provides a ligand contact to CTP. UTP is bound at residue serine 13. Residues 14-19 (SLGKGI) and aspartate 71 contribute to the ATP site. Residues aspartate 71 and glutamate 139 each coordinate Mg(2+). CTP contacts are provided by residues 146–148 (DIE), 186–191 (KTKPTQ), and lysine 222. Residues 186–191 (KTKPTQ) and lysine 222 contribute to the UTP site. Residues 290–541 (TIAMVGKYME…VNAALKYSGK (252 aa)) form the Glutamine amidotransferase type-1 domain. Residue glycine 351 participates in L-glutamine binding. Catalysis depends on cysteine 378, which acts as the Nucleophile; for glutamine hydrolysis. L-glutamine is bound by residues 379–382 (LGMQ), glutamate 402, and arginine 469. Catalysis depends on residues histidine 514 and glutamate 516.

Belongs to the CTP synthase family. In terms of assembly, homotetramer.

The enzyme catalyses UTP + L-glutamine + ATP + H2O = CTP + L-glutamate + ADP + phosphate + 2 H(+). It carries out the reaction L-glutamine + H2O = L-glutamate + NH4(+). It catalyses the reaction UTP + NH4(+) + ATP = CTP + ADP + phosphate + 2 H(+). It participates in pyrimidine metabolism; CTP biosynthesis via de novo pathway; CTP from UDP: step 2/2. Its activity is regulated as follows. Allosterically activated by GTP, when glutamine is the substrate; GTP has no effect on the reaction when ammonia is the substrate. The allosteric effector GTP functions by stabilizing the protein conformation that binds the tetrahedral intermediate(s) formed during glutamine hydrolysis. Inhibited by the product CTP, via allosteric rather than competitive inhibition. In terms of biological role, catalyzes the ATP-dependent amination of UTP to CTP with either L-glutamine or ammonia as the source of nitrogen. Regulates intracellular CTP levels through interactions with the four ribonucleotide triphosphates. This Pseudomonas aeruginosa (strain LESB58) protein is CTP synthase.